Consider the following 109-residue polypeptide: Class I hydrophobin 2 (109 aa).

The N-terminal stretch at 1–18 is a signal peptide; the sequence is MQFKLAFVSIALATLAVA. 4 disulfides stabilise this stretch: Cys-30/Cys-90, Cys-37/Cys-84, Cys-38/Cys-71, and Cys-91/Cys-104.

It belongs to the fungal hydrophobin family. As to quaternary structure, self-assembles to form functional amyloid fibrils called rodlets. Self-assembly into fibrillar rodlets occurs spontaneously at hydrophobic:hydrophilic interfaces and the rodlets further associate laterally to form amphipathic monolayers.

The protein localises to the secreted. It localises to the cell wall. Its function is as follows. Aerial growth, conidiation, and dispersal of filamentous fungi in the environment rely upon a capability of their secreting small amphipathic proteins called hydrophobins (HPBs) with low sequence identity. Class I can self-assemble into an outermost layer of rodlet bundles on aerial cell surfaces, conferring cellular hydrophobicity that supports fungal growth, development and dispersal; whereas Class II form highly ordered films at water-air interfaces through intermolecular interactions but contribute nothing to the rodlet structure. Hyd2 is a class I hydrophobin that may allow the dikaryotic mycelia to attach to the hydrophobic surface of the substrate. Higher expression in dikaryotic mycelia than in monokaryotic mycelia indicates that dikaryons require more hyd2 hydrophobin than the monokaryons, presumably for a higher rate of hyphal growth. The sequence is that of Class I hydrophobin 2 from Lentinula edodes (Shiitake mushroom).